A 405-amino-acid chain; its full sequence is Multidrug resistance protein MdtA (405 aa).

Positions M1 to A22 are cleaved as a signal peptide. Residues V35–S52 are compositionally biased toward polar residues. The tract at residues V35–V62 is disordered.

Belongs to the membrane fusion protein (MFP) (TC 8.A.1) family. As to quaternary structure, part of a tripartite efflux system composed of MdtA, MdtB and MdtC.

The protein resides in the cell inner membrane. The protein is Multidrug resistance protein MdtA of Erwinia amylovora (strain ATCC 49946 / CCPPB 0273 / Ea273 / 27-3).